We begin with the raw amino-acid sequence, 93 residues long: MISIYAQIASFSAIGVGIAIGVAACGGGIGMGIAANATILGMARNPSISSKLTTTMYISLAMIEAQVIYALVIVFILLYANPLLTETIAAAAK.

A run of 2 helical transmembrane segments spans residues 13–33 and 58–78; these read AIGV…GMGI and ISLA…FILL.

This sequence belongs to the ATPase C chain family. In terms of assembly, F-type ATPases have 2 components, F(1) - the catalytic core - and F(0) - the membrane proton channel. F(1) has five subunits: alpha(3), beta(3), gamma(1), delta(1), epsilon(1). F(0) has three main subunits: a(1), b(2) and c(10-14). The alpha and beta chains form an alternating ring which encloses part of the gamma chain. F(1) is attached to F(0) by a central stalk formed by the gamma and epsilon chains, while a peripheral stalk is formed by the delta and b chains.

The protein localises to the cell inner membrane. In terms of biological role, f(1)F(0) ATP synthase produces ATP from ADP in the presence of a proton or sodium gradient. F-type ATPases consist of two structural domains, F(1) containing the extramembraneous catalytic core and F(0) containing the membrane proton channel, linked together by a central stalk and a peripheral stalk. During catalysis, ATP synthesis in the catalytic domain of F(1) is coupled via a rotary mechanism of the central stalk subunits to proton translocation. Its function is as follows. Key component of the F(0) channel; it plays a direct role in translocation across the membrane. A homomeric c-ring of between 10-14 subunits forms the central stalk rotor element with the F(1) delta and epsilon subunits. The polypeptide is ATP synthase subunit c (Campylobacter hominis (strain ATCC BAA-381 / DSM 21671 / CCUG 45161 / LMG 19568 / NCTC 13146 / CH001A)).